The sequence spans 502 residues: Protein nucleotidyltransferase YdiU (502 aa).

G98, G100, R101, K121, D133, G134, R184, and R191 together coordinate ATP. The Proton acceptor role is filled by D260. Residues N261 and D270 each coordinate Mg(2+). D270 provides a ligand contact to ATP.

This sequence belongs to the SELO family. It depends on Mg(2+) as a cofactor. Mn(2+) is required as a cofactor.

The enzyme catalyses L-seryl-[protein] + ATP = 3-O-(5'-adenylyl)-L-seryl-[protein] + diphosphate. It carries out the reaction L-threonyl-[protein] + ATP = 3-O-(5'-adenylyl)-L-threonyl-[protein] + diphosphate. It catalyses the reaction L-tyrosyl-[protein] + ATP = O-(5'-adenylyl)-L-tyrosyl-[protein] + diphosphate. The catalysed reaction is L-histidyl-[protein] + UTP = N(tele)-(5'-uridylyl)-L-histidyl-[protein] + diphosphate. The enzyme catalyses L-seryl-[protein] + UTP = O-(5'-uridylyl)-L-seryl-[protein] + diphosphate. It carries out the reaction L-tyrosyl-[protein] + UTP = O-(5'-uridylyl)-L-tyrosyl-[protein] + diphosphate. Nucleotidyltransferase involved in the post-translational modification of proteins. It can catalyze the addition of adenosine monophosphate (AMP) or uridine monophosphate (UMP) to a protein, resulting in modifications known as AMPylation and UMPylation. This chain is Protein nucleotidyltransferase YdiU, found in Rhizobium rhizogenes (strain K84 / ATCC BAA-868) (Agrobacterium radiobacter).